The sequence spans 510 residues: Outer spore wall protein 7 (510 aa).

An N-terminal signal peptide occupies residues 1–23; the sequence is MKAVFKVTTALLACVFIARYLVC. The segment at 167 to 195 is disordered; that stretch reads FETDSETEDYEDDENENEDEDEDEDEDDV. Over residues 169 to 195 the composition is skewed to acidic residues; the sequence is TDSETEDYEDDENENEDEDEDEDEDDV. Tyrosine 354 is subject to Phosphotyrosine.

Belongs to the OSW/SHE family.

Its function is as follows. Involved in spore wall assembly. The polypeptide is Outer spore wall protein 7 (Saccharomyces cerevisiae (strain ATCC 204508 / S288c) (Baker's yeast)).